The chain runs to 589 residues: TAF5-like RNA polymerase II p300/CBP-associated factor-associated factor 65 kDa subunit 5L (589 aa).

Positions 211–221 (ASGSSSRSENN) are enriched in polar residues. The interval 211-230 (ASGSSSRSENNGLEPPDMPS) is disordered. WD repeat units follow at residues 266 to 305 (NTEQ…LKSE), 340 to 379 (GHCG…NTVL), 382 to 421 (GHAY…PLRI), 424 to 463 (GHLA…SVRL), 466 to 505 (GHRG…LYKE), and 508 to 547 (GHTD…CSAP).

This sequence belongs to the WD repeat TAF5 family. As to quaternary structure, the PCAF complex is composed of a number of TBP-associated factors (TAFS), such as TAF5, TAF5L, TAF6, TAF6L, TAF9, TAF10 and TAF12, PCAF, and also PCAF-associated factors (PAFs), such as TADA2L/ADA2, TADA3L/ADA3 and SPT3. Component of the STAGA transcription coactivator-HAT complex, at least composed of SUPT3H, GCN5L2, TAF5L, TAF6L, SUPT7L, TADA3L, TAD1L, TAF10, TAF12, TRRAP and TAF9.

Its subcellular location is the nucleus. Functions as a component of the PCAF complex. The PCAF complex is capable of efficiently acetylating histones in a nucleosomal context. The PCAF complex could be considered as the human version of the yeast SAGA complex. With TAF6L, acts as an epigenetic regulator essential for somatic reprogramming. Regulates target genes through H3K9ac deposition and MYC recruitment which trigger MYC regulatory network to orchestrate gene expression programs to control embryonic stem cell state. The polypeptide is TAF5-like RNA polymerase II p300/CBP-associated factor-associated factor 65 kDa subunit 5L (Homo sapiens (Human)).